Here is a 392-residue protein sequence, read N- to C-terminus: Anhydro-N-acetylmuramic acid kinase (392 aa).

Residue 22–29 (GTSMDGVD) coordinates ATP.

This sequence belongs to the anhydro-N-acetylmuramic acid kinase family.

The enzyme catalyses 1,6-anhydro-N-acetyl-beta-muramate + ATP + H2O = N-acetyl-D-muramate 6-phosphate + ADP + H(+). It participates in amino-sugar metabolism; 1,6-anhydro-N-acetylmuramate degradation. The protein operates within cell wall biogenesis; peptidoglycan recycling. Functionally, catalyzes the specific phosphorylation of 1,6-anhydro-N-acetylmuramic acid (anhMurNAc) with the simultaneous cleavage of the 1,6-anhydro ring, generating MurNAc-6-P. Is required for the utilization of anhMurNAc either imported from the medium or derived from its own cell wall murein, and thus plays a role in cell wall recycling. The sequence is that of Anhydro-N-acetylmuramic acid kinase from Burkholderia pseudomallei (strain 1106a).